Reading from the N-terminus, the 381-residue chain is MNLNFMPLLHAYNHASIDFHFNSSARDFCVHEVPLYEFSNTGEHAVIQVRKSGLSTLEMLQIFSQILGVRIAELGYAGLKDKNALTTQFISLPKKYAPLLEKNTSNFQEKNLKILSLNYHHNKIKLGHLKGNRFFMRFKKMTPLNAQKTKQVLEQIAQFGMPNYFGSQRFGKFNDNHQEGLKILQNQTKFAHQKLNAFLISSYQSYLFNALLSKRLEISKIISAFSVKENLEFFKQKNLSVDSDTLKTLKNQAHPFKILEGDVMCHYPYGKFFDALELEKEGERFLKKEVAPTGLLDGKKALYAKNLSLEIEKEFQHNLLSSHAKTLGSRRFFWVFVENVTSQYVKEKAQFELGFYLPKGSYASALLKEIKHEKGENNDEF.

The active-site Nucleophile is Asp-81. Positions Gly-160–Val-335 constitute a TRUD domain.

The protein belongs to the pseudouridine synthase TruD family.

It catalyses the reaction uridine(13) in tRNA = pseudouridine(13) in tRNA. In terms of biological role, responsible for synthesis of pseudouridine from uracil-13 in transfer RNAs. The sequence is that of tRNA pseudouridine synthase D from Helicobacter pylori (strain ATCC 700392 / 26695) (Campylobacter pylori).